A 236-amino-acid polypeptide reads, in one-letter code: 2,3,4,5-tetrahydropyridine-2,6-dicarboxylate N-acetyltransferase (236 aa).

Belongs to the transferase hexapeptide repeat family. DapH subfamily.

It carries out the reaction (S)-2,3,4,5-tetrahydrodipicolinate + acetyl-CoA + H2O = L-2-acetamido-6-oxoheptanedioate + CoA. It participates in amino-acid biosynthesis; L-lysine biosynthesis via DAP pathway; LL-2,6-diaminopimelate from (S)-tetrahydrodipicolinate (acetylase route): step 1/3. Catalyzes the transfer of an acetyl group from acetyl-CoA to tetrahydrodipicolinate. This is 2,3,4,5-tetrahydropyridine-2,6-dicarboxylate N-acetyltransferase from Clostridium botulinum (strain ATCC 19397 / Type A).